Reading from the N-terminus, the 412-residue chain is cAMP-dependent protein kinase regulatory subunit (412 aa).

The segment at 1–142 (MSFEEVYEEL…RLKRSVAGNF (142 aa)) is dimerization and phosphorylation. The short motif at 101–105 (RRQSV) is the Pseudophosphorylation motif element. S104 is modified (phosphoserine). Residues 143–277 (LFKN…EEVP), E224, R233, 278–412 (ILSS…STKA), E344, and R353 each bind 3',5'-cyclic AMP. Positions 392-412 (MGMDNEYGDQSLHRSPPSTKA) are disordered.

This sequence belongs to the cAMP-dependent kinase regulatory chain family. Tetramer, composed of 2 regulatory (R) and 2 catalytic (C) subunits. In the presence of cAMP it dissociates into 2 active monomeric C subunits and an R dimer.

This chain is cAMP-dependent protein kinase regulatory subunit (cgs1), found in Schizosaccharomyces pombe (strain 972 / ATCC 24843) (Fission yeast).